The chain runs to 352 residues: Protein RecA (352 aa).

ATP is bound at residue 67-74 (GPESSGKT).

This sequence belongs to the RecA family.

Its subcellular location is the cytoplasm. Its function is as follows. Can catalyze the hydrolysis of ATP in the presence of single-stranded DNA, the ATP-dependent uptake of single-stranded DNA by duplex DNA, and the ATP-dependent hybridization of homologous single-stranded DNAs. It interacts with LexA causing its activation and leading to its autocatalytic cleavage. This chain is Protein RecA, found in Aggregatibacter actinomycetemcomitans (Actinobacillus actinomycetemcomitans).